Consider the following 65-residue polypeptide: Non-structural protein 5a (65 aa).

In Avian infectious bronchitis virus (strain Beaudette) (IBV), this protein is Non-structural protein 5a.